A 40-amino-acid polypeptide reads, in one-letter code: Dolichyl-diphosphooligosaccharide--protein glycosyltransferase subunit 4 (40 aa).

At 1–4 (MISD) the chain is on the lumenal side. The helical transmembrane segment at 5-25 (VQLAIFSNVLGVFLFLLVVAY) threads the bilayer. Over 26–40 (HYINANTGKPSAKAK) the chain is Cytoplasmic.

It belongs to the OST4 family. As to quaternary structure, component of the oligosaccharyltransferase (OST) complex.

It is found in the endoplasmic reticulum membrane. Its function is as follows. Subunit of the oligosaccharyl transferase (OST) complex that catalyzes the initial transfer of a defined glycan (Glc(3)Man(9)GlcNAc(2) in eukaryotes) from the lipid carrier dolichol-pyrophosphate to an asparagine residue within an Asn-X-Ser/Thr consensus motif in nascent polypeptide chains, the first step in protein N-glycosylation. N-glycosylation occurs cotranslationally and the complex associates with the Sec61 complex at the channel-forming translocon complex that mediates protein translocation across the endoplasmic reticulum (ER). All subunits are required for a maximal enzyme activity. This chain is Dolichyl-diphosphooligosaccharide--protein glycosyltransferase subunit 4, found in Drosophila yakuba (Fruit fly).